Reading from the N-terminus, the 1037-residue chain is Presequence protease, mitochondrial (1037 aa).

The transit peptide at Met1–Trp28 directs the protein to the mitochondrion. His104 contacts Zn(2+). Glu107 acts as the Proton acceptor in catalysis. His108 is a binding site for Zn(2+). Cys119 and Cys556 are disulfide-bonded. Residue Glu180 is part of the active site. Glu205 provides a ligand contact to Zn(2+). Lys759 is modified (N6-acetyllysine). The residue at position 770 (Lys770) is an N6-acetyllysine; alternate. Lys770 carries the post-translational modification N6-succinyllysine; alternate. The span at Gly804–Arg814 shows a compositional bias: basic residues. Positions Gly804–His834 are disordered. N6-succinyllysine is present on Lys849. At Lys884 the chain carries N6-acetyllysine. Lys946 bears the N6-succinyllysine mark.

This sequence belongs to the peptidase M16 family. PreP subfamily. Monomer and homodimer; homodimerization is induced by binding of the substrate. The cofactor is Zn(2+). A disulfide bond locks the enzyme in the closed conformation preventing substrate entry into the catalytic chamber. Widely expressed. Expressed at higher level in muscle and heart compared to brain, pancreas, liver, lung and placenta.

It localises to the mitochondrion. The protein resides in the mitochondrion matrix. Its activity is regulated as follows. Mainly exists in a closed and catalytically competent conformation but a closed-to-open switch allows substrate entry into the catalytic chamber. Substrate binding induces closure and dimerization. A disulfide bond may lock the enzyme in a closed conformation preventing substrate entry into the catalytic chamber, participating in redox regulation of the enzyme. Inhibited by metal-chelating agents. Inhibited by nickel and zinc excess, and slightly activated by manganese. In terms of biological role, metalloendopeptidase of the mitochondrial matrix that functions in peptide cleavage and degradation rather than in protein processing. Has an ATP-independent activity. Specifically cleaves peptides in the range of 5 to 65 residues. Shows a preference for cleavage after small polar residues and before basic residues, but without any positional preference. Degrades the transit peptides of mitochondrial proteins after their cleavage. Also degrades other unstructured peptides. It is also able to degrade amyloid-beta protein 40, one of the peptides produced by APP processing, when it accumulates in mitochondrion. It is a highly efficient protease, at least toward amyloid-beta protein 40. Cleaves that peptide at a specific position and is probably not processive, releasing digested peptides intermediates that can be further cleaved subsequently. It is also able to degrade amyloid-beta protein 42. This Homo sapiens (Human) protein is Presequence protease, mitochondrial.